We begin with the raw amino-acid sequence, 1384 residues long: Contactin-associated protein 1 (1384 aa).

Residues 1 to 19 form the signal peptide; sequence MMHLRLFCILLAAVSGAEG. The Extracellular segment spans residues 20–1283; it reads WGYYGCDEEL…PYYHDEGWVA (1264 aa). The F5/8 type C domain maps to 25-168; sequence CDEELVGPLY…IGLRLGLYGC (144 aa). A disulfide bond links Cys-25 and Cys-168. 3 N-linked (GlcNAc...) asparagine glycosylation sites follow: Asn-120, Asn-128, and Asn-276. Laminin G-like domains lie at 203–355 and 389–538; these read FKTE…AFRC and FRTW…FDTC. Residues Cys-323 and Cys-355 are joined by a disulfide bond. N-linked (GlcNAc...) asparagine glycosylation is found at Asn-420, Asn-499, and Asn-518. 4 disulfide bridges follow: Cys-506-Cys-538, Cys-544-Cys-555, Cys-549-Cys-564, and Cys-566-Cys-576. In terms of domain architecture, EGF-like 1 spans 540–577; sequence ITDRCSPNMCEHDGRCYQSWDDFICYCELTGYKGETCH. Residues 576 to 795 enclose the Fibrinogen C-terminal domain; the sequence is CHTPLYKESC…NTISFHTGAA (220 aa). N-linked (GlcNAc...) asparagine glycans are attached at residues Asn-597, Asn-653, Asn-664, Asn-763, Asn-804, Asn-843, Asn-860, Asn-948, and Asn-956. The Laminin G-like 3 domain maps to 813-956; that stretch reads FRTSAPSGVF…ANASEGTSPN (144 aa). Intrachain disulfides connect Cys-930/Cys-957, Cys-961/Cys-974, Cys-968/Cys-983, and Cys-985/Cys-995. One can recognise an EGF-like 2 domain in the interval 957–996; the sequence is CTGHCAHPRLPCFHGGRCVERYSYYTCDCDLTAFDGPYCN. Residues Asn-1078 and Asn-1147 are each glycosylated (N-linked (GlcNAc...) asparagine). Residues 1088–1250 form the Laminin G-like 4 domain; sequence FSTSSAPAVL…VQGELSESNC (163 aa). A disulfide bridge links Cys-1209 with Cys-1250. Residues 1284 to 1304 traverse the membrane as a helical segment; sequence ILLGFLVAFLLLGLVGMLVLF. Over 1305–1384 the chain is Cytoplasmic; sequence YLQNHRYKGS…PQILEESRSE (80 aa). The span at 1319-1328 shows a compositional bias: basic and acidic residues; the sequence is EPKAAHEYHP. The interval 1319–1384 is disordered; sequence EPKAAHEYHP…PQILEESRSE (66 aa). The SH3-binding motif lies at 1328–1369; it reads PGSKPPLPTSGPAQVPTPTAAPNQAPASAPAPAPTPAPAPGP. A compositionally biased stretch (low complexity) spans 1339 to 1355; sequence PAQVPTPTAAPNQAPAS. The segment covering 1356–1368 has biased composition (pro residues); sequence APAPAPTPAPAPG. Ser-1383 carries the phosphoserine modification.

This sequence belongs to the neurexin family. As to quaternary structure, interacts with CNTN1/contactin in cis form. Predominantly expressed in brain. Weak expression detected in ovary, pancreas, colon, lung, heart, intestine and testis.

The protein resides in the membrane. The protein localises to the cell junction. It is found in the paranodal septate junction. In terms of biological role, required, with CNTNAP2, for radial and longitudinal organization of myelinated axons. Plays a role in the formation of functional distinct domains critical for saltatory conduction of nerve impulses in myelinated nerve fibers. Demarcates the paranodal region of the axo-glial junction. In association with contactin involved in the signaling between axons and myelinating glial cells. This is Contactin-associated protein 1 (CNTNAP1) from Homo sapiens (Human).